The following is an 89-amino-acid chain: Large ribosomal subunit protein bL28 (89 aa).

It belongs to the bacterial ribosomal protein bL28 family.

This is Large ribosomal subunit protein bL28 from Chlamydia trachomatis serovar A (strain ATCC VR-571B / DSM 19440 / HAR-13).